We begin with the raw amino-acid sequence, 1118 residues long: Sodium-driven chloride bicarbonate exchanger (1118 aa).

Disordered regions lie at residues 1–23 (MEIK…EEAV) and 58–97 (GRKS…TPSQ). Residues 1–509 (MEIKDQGAQM…DFRDAFSLQC (509 aa)) lie on the Cytoplasmic side of the membrane. Basic residues predominate over residues 59–76 (RKSHRRHRHRGHKHRKRD). The segment covering 77–90 (RERDSGLEDGRESP) has biased composition (basic and acidic residues). Position 89 is a phosphoserine (serine 89). Phosphothreonine is present on threonine 94. Histidine 221 and histidine 223 together coordinate Zn(2+). Disordered stretches follow at residues 269–310 (AENK…KGPP) and 457–476 (NGTA…GPEL). Position 276 is a phosphoserine (serine 276). The helical transmembrane segment at 510–530 (LASFLFLYCACMSPVITFGGL) threads the bilayer. Topologically, residues 531–538 (LGEATEGR) are extracellular. Residues 539–559 (ISAIESLFGASMTGIAYSLFG) form a helical membrane-spanning segment. At 560–562 (GQP) the chain is on the cytoplasmic side. Residues 563–583 (LTILGSTGPVLVFEKILFKFC) form a helical membrane-spanning segment. Residues 584–596 (KEYGLSYLSLRAS) are Extracellular-facing. Residues 597-617 (IGLWTATLCIILVATDASSLV) form a helical membrane-spanning segment. Residues 618–626 (CYITRFTEE) lie on the Cytoplasmic side of the membrane. Residues 627–647 (AFASLICIIFIYEALEKLFEL) traverse the membrane as a helical segment. At 648–720 (SETYPINMHN…VGRACGHGHP (73 aa)) the chain is on the extracellular side. Residues asparagine 677, asparagine 687, and asparagine 697 are each glycosylated (N-linked (GlcNAc...) asparagine). The chain crosses the membrane as a helical span at residues 721–741 (YVPDVLFWSVILFFSTVTMSA). At 742 to 762 (TLKQFKTSRYFPTKVRSIVSD) the chain is on the cytoplasmic side. Residues 763 to 783 (FAVFLTILCMVLIDYAIGIPS) form a helical membrane-spanning segment. Residues 784 to 809 (PKLQVPSVFKPTRDDRGWFVTPLGPN) are Extracellular-facing. Residues 810–830 (PWWTIIAAIIPALLCTILIFM) traverse the membrane as a helical segment. The Cytoplasmic portion of the chain corresponds to 831 to 855 (DQQITAVIINRKEHKLKKGCGYHLD). Residues 856 to 876 (LLMVAVMLGVCSIMGLPWFVA) traverse the membrane as a helical segment. Over 877-912 (ATVLSITHVNSLKLESECSAPGEQPKFLGIREQRVT) the chain is Extracellular. Residues 913–933 (GLMIFILMGSSVFMTSILKFI) traverse the membrane as a helical segment. Over 934–935 (PM) the chain is Cytoplasmic. Residues 936-956 (PVLYGVFLYMGASSLKGIQLF) form a helical membrane-spanning segment. Residues 957–998 (DRIKLFWMPAKHQPDFIYLRHVPLRKVHLFTVIQMSCLGLLW) are Extracellular-facing. A helical transmembrane segment spans residues 999-1019 (IIKVSRAAIVFPMMVLALVFV). Over 1020–1118 (RKLMDFLFTK…SRFPSKSSPS (99 aa)) the chain is Cytoplasmic. A phosphoserine mark is found at serine 1057 and serine 1085.

It belongs to the anion exchanger (TC 2.A.31) family. N-glycosylated. In terms of tissue distribution, in the brain, detected in cerebral cortex, subcortex, cerebellum, hippocampus and medulla (at protein level). In the cerebrum, expressed at high levels throughout the cortex, at lower levels in striatum and not detectable in the corpus callosum (at protein level). In the cerebellum, detected at high levels in the molecular layer but at very low levels in the granular layer (at protein level). In the central nervous system, detected in neurons in the olfactory bulb, cortex and cerebellum (at protein level). Within the hippocampus, abundantly expressed in CA3 pyramidal cells (at protein level). Strongly expressed in the retina with high levels in bipolar and amacrine cells (at protein level). Expressed in the epithelial cells of the choroid plexus. During embryonic development, expressed in neurons of the central nervous system. Also expressed in the peripheral nervous system and in non-neuronal tissues such as the dura and some epithelia including the acid-secreting epithelium of the stomach and the duodenal epithelium. In the embryonic retina, expression is restricted to the neuronal cell layer and the retinal pigment epithelium. Expressed at high levels in brain and at low levels in the pituitary, testis, kidney and ileum. Also expressed in pancreatic islets.

It is found in the basolateral cell membrane. It localises to the apical cell membrane. The protein localises to the cell projection. The protein resides in the dendrite. Its subcellular location is the axon. It is found in the perikaryon. It localises to the presynapse. The protein localises to the postsynapse. The catalysed reaction is 2 hydrogencarbonate(out) + chloride(in) + Na(+)(out) = 2 hydrogencarbonate(in) + chloride(out) + Na(+)(in). With respect to regulation, zinc-binding negatively regulates its activity. Its function is as follows. Sodium/bicarbonate cotransporter which plays an important role in regulating intracellular pH. Has been shown to act as a sodium/bicarbonate cotransporter in exchange for intracellular chloride. Has also been shown to act as a sodium/biocarbonate cotransporter which is not responsible for net efflux of chloride, with the observed chloride efflux being due to chloride self-exchange. Controls neuronal pH and may contribute to the secretion of cerebrospinal fluid. Acting on presynaptic intracellular pH, it promotes GABA release, reduces the excitability of CA1 pyramidal neurons, and modulates short-term synaptic plasticity. Required in retinal cells to maintain normal pH which is necessary for normal vision. In the kidney, likely to mediate bicarbonate reclamation in the apical membrane of the proximal tubules. In terms of biological role, sodium/bicarbonate cotransporter which mediates cotransport of sodium and bicarbonate in association with an efflux of intracellular chloride. The chain is Sodium-driven chloride bicarbonate exchanger from Mus musculus (Mouse).